The sequence spans 332 residues: Holliday junction branch migration complex subunit RuvB (332 aa).

The tract at residues 1-181 (MSRILDNELM…FGITGHMEYY (181 aa)) is large ATPase domain (RuvB-L). Residues Leu20, Arg21, Gly62, Lys65, Thr66, Thr67, 128-130 (EDF), Arg171, Tyr181, and Arg218 contribute to the ATP site. Thr66 provides a ligand contact to Mg(2+). A small ATPAse domain (RuvB-S) region spans residues 182–252 (EAGDLTEIVE…ITDQALSMLD (71 aa)). Positions 255–332 (QEGLDYVDQK…EHLGYEYMKE (78 aa)) are head domain (RuvB-H). 4 residues coordinate DNA: Arg291, Arg310, Arg312, and Arg315.

It belongs to the RuvB family. Homohexamer. Forms an RuvA(8)-RuvB(12)-Holliday junction (HJ) complex. HJ DNA is sandwiched between 2 RuvA tetramers; dsDNA enters through RuvA and exits via RuvB. An RuvB hexamer assembles on each DNA strand where it exits the tetramer. Each RuvB hexamer is contacted by two RuvA subunits (via domain III) on 2 adjacent RuvB subunits; this complex drives branch migration. In the full resolvosome a probable DNA-RuvA(4)-RuvB(12)-RuvC(2) complex forms which resolves the HJ.

The protein resides in the cytoplasm. It carries out the reaction ATP + H2O = ADP + phosphate + H(+). Functionally, the RuvA-RuvB-RuvC complex processes Holliday junction (HJ) DNA during genetic recombination and DNA repair, while the RuvA-RuvB complex plays an important role in the rescue of blocked DNA replication forks via replication fork reversal (RFR). RuvA specifically binds to HJ cruciform DNA, conferring on it an open structure. The RuvB hexamer acts as an ATP-dependent pump, pulling dsDNA into and through the RuvAB complex. RuvB forms 2 homohexamers on either side of HJ DNA bound by 1 or 2 RuvA tetramers; 4 subunits per hexamer contact DNA at a time. Coordinated motions by a converter formed by DNA-disengaged RuvB subunits stimulates ATP hydrolysis and nucleotide exchange. Immobilization of the converter enables RuvB to convert the ATP-contained energy into a lever motion, pulling 2 nucleotides of DNA out of the RuvA tetramer per ATP hydrolyzed, thus driving DNA branch migration. The RuvB motors rotate together with the DNA substrate, which together with the progressing nucleotide cycle form the mechanistic basis for DNA recombination by continuous HJ branch migration. Branch migration allows RuvC to scan DNA until it finds its consensus sequence, where it cleaves and resolves cruciform DNA. The sequence is that of Holliday junction branch migration complex subunit RuvB from Streptococcus sanguinis (strain SK36).